Here is a 67-residue protein sequence, read N- to C-terminus: DNA-directed RNA polymerase subunit omega (67 aa).

Belongs to the RNA polymerase subunit omega family. As to quaternary structure, the RNAP catalytic core consists of 2 alpha, 1 beta, 1 beta' and 1 omega subunit. When a sigma factor is associated with the core the holoenzyme is formed, which can initiate transcription.

It carries out the reaction RNA(n) + a ribonucleoside 5'-triphosphate = RNA(n+1) + diphosphate. Promotes RNA polymerase assembly. Latches the N- and C-terminal regions of the beta' subunit thereby facilitating its interaction with the beta and alpha subunits. The sequence is that of DNA-directed RNA polymerase subunit omega from Bordetella avium (strain 197N).